A 225-amino-acid polypeptide reads, in one-letter code: NAD(P)H-quinone oxidoreductase subunit K, chloroplastic (225 aa).

Residues C43, C44, C108, and C139 each contribute to the [4Fe-4S] cluster site.

This sequence belongs to the complex I 20 kDa subunit family. In terms of assembly, NDH is composed of at least 16 different subunits, 5 of which are encoded in the nucleus. The cofactor is [4Fe-4S] cluster.

It localises to the plastid. It is found in the chloroplast thylakoid membrane. It catalyses the reaction a plastoquinone + NADH + (n+1) H(+)(in) = a plastoquinol + NAD(+) + n H(+)(out). The catalysed reaction is a plastoquinone + NADPH + (n+1) H(+)(in) = a plastoquinol + NADP(+) + n H(+)(out). NDH shuttles electrons from NAD(P)H:plastoquinone, via FMN and iron-sulfur (Fe-S) centers, to quinones in the photosynthetic chain and possibly in a chloroplast respiratory chain. The immediate electron acceptor for the enzyme in this species is believed to be plastoquinone. Couples the redox reaction to proton translocation, and thus conserves the redox energy in a proton gradient. The protein is NAD(P)H-quinone oxidoreductase subunit K, chloroplastic of Populus alba (White poplar).